A 238-amino-acid polypeptide reads, in one-letter code: Ion-translocating oxidoreductase complex subunit E (238 aa).

The next 6 membrane-spanning stretches (helical) occupy residues 24-44 (ALWQ…TLAV), 52-72 (LGMG…ISSM), 84-104 (VMIG…NAWM), 106-126 (ELYK…AVLG), 141-161 (ILDG…IGGI), and 195-215 (GILL…LLAA).

It belongs to the NqrDE/RnfAE family. The complex is composed of six subunits: RnfA, RnfB, RnfC, RnfD, RnfE and RnfG.

The protein resides in the cell inner membrane. Functionally, part of a membrane-bound complex that couples electron transfer with translocation of ions across the membrane. In Azotobacter vinelandii (strain DJ / ATCC BAA-1303), this protein is Ion-translocating oxidoreductase complex subunit E.